A 344-amino-acid chain; its full sequence is DNA polymerase IV (344 aa).

The UmuC domain occupies 2 to 183; that stretch reads IMLIDFDYFF…IKINDIPGIG (182 aa). Positions 6 and 105 each coordinate Mg(2+). Residue E106 is part of the active site.

Belongs to the DNA polymerase type-Y family. In terms of assembly, monomer. Mg(2+) serves as cofactor.

It localises to the cytoplasm. The enzyme catalyses DNA(n) + a 2'-deoxyribonucleoside 5'-triphosphate = DNA(n+1) + diphosphate. Functionally, poorly processive, error-prone DNA polymerase involved in untargeted mutagenesis. Copies undamaged DNA at stalled replication forks, which arise in vivo from mismatched or misaligned primer ends. These misaligned primers can be extended by PolIV. Exhibits no 3'-5' exonuclease (proofreading) activity. May be involved in translesional synthesis. The polypeptide is DNA polymerase IV (Picrophilus torridus (strain ATCC 700027 / DSM 9790 / JCM 10055 / NBRC 100828 / KAW 2/3)).